A 316-amino-acid chain; its full sequence is D-alanine--D-alanine ligase (316 aa).

Residues 112–310 (KTALKAHGLP…FGKLCRWLVE (199 aa)) form the ATP-grasp domain. Position 139-189 (139-189 (MATPYVVKPNNEGSSVGVYLVNEAANGPPHLSDDMPDEVMVETYAPGRELT)) interacts with ATP. Positions 261, 277, and 279 each coordinate Mg(2+).

Belongs to the D-alanine--D-alanine ligase family. It depends on Mg(2+) as a cofactor. Mn(2+) is required as a cofactor.

Its subcellular location is the cytoplasm. It catalyses the reaction 2 D-alanine + ATP = D-alanyl-D-alanine + ADP + phosphate + H(+). It participates in cell wall biogenesis; peptidoglycan biosynthesis. Its function is as follows. Cell wall formation. The protein is D-alanine--D-alanine ligase of Jannaschia sp. (strain CCS1).